Here is a 375-residue protein sequence, read N- to C-terminus: Platelet-derived growth factor receptor-like protein (375 aa).

The N-terminal stretch at 1–21 (MKIWLLLGLLLMHEALEDVTG) is a signal peptide. A disordered region spans residues 20 to 64 (TGQHPPKNKRPKEPGENRIKPTNKKVKPKIPKIKDRDSADPTPKT). A compositionally biased stretch (basic residues) spans 40 to 50 (PTNKKVKPKIP). Positions 62-159 (PKTQSIMTQM…GYVCRRDEAK (98 aa)) constitute an Ig-like C2-type 1 domain. C96 and C143 form a disulfide bridge. Residues N132 and N219 are each glycosylated (N-linked (GlcNAc...) asparagine). One can recognise an Ig-like C2-type 2 domain in the interval 272-373 (PSTTILASSN…GQTTVATTVE (102 aa)). C293 and C357 are joined by a disulfide.

In terms of assembly, forms a complex composed of PDGFRL, TNK2 and GRB2.

It is found in the secreted. This Bos taurus (Bovine) protein is Platelet-derived growth factor receptor-like protein (PDGFRL).